The chain runs to 65 residues: MAFDTKLLEIIACPVCKGKLRFDKENSELISTAAKLAYPVIDDIPVLLENEARELSLDEVQKWNS.

Belongs to the UPF0434 family.

The protein is UPF0434 protein PSHAa1659 of Pseudoalteromonas translucida (strain TAC 125).